The following is a 118-amino-acid chain: Large ribosomal subunit protein bL19 (118 aa).

This sequence belongs to the bacterial ribosomal protein bL19 family.

In terms of biological role, this protein is located at the 30S-50S ribosomal subunit interface and may play a role in the structure and function of the aminoacyl-tRNA binding site. The polypeptide is Large ribosomal subunit protein bL19 (Beutenbergia cavernae (strain ATCC BAA-8 / DSM 12333 / CCUG 43141 / JCM 11478 / NBRC 16432 / NCIMB 13614 / HKI 0122)).